A 610-amino-acid chain; its full sequence is UvrABC system protein C (610 aa).

One can recognise a GIY-YIG domain in the interval 16–94 (SQPGVYRMYD…IKLYQPRYNV (79 aa)). In terms of domain architecture, UVR spans 204-239 (DQVLTQLIARMEKASQDLAFEEAARIRDQIQAVRRV).

Belongs to the UvrC family. As to quaternary structure, interacts with UvrB in an incision complex.

The protein resides in the cytoplasm. Functionally, the UvrABC repair system catalyzes the recognition and processing of DNA lesions. UvrC both incises the 5' and 3' sides of the lesion. The N-terminal half is responsible for the 3' incision and the C-terminal half is responsible for the 5' incision. In Salmonella paratyphi B (strain ATCC BAA-1250 / SPB7), this protein is UvrABC system protein C.